We begin with the raw amino-acid sequence, 428 residues long: Zinc-type alcohol dehydrogenase B (428 aa).

6 residues coordinate Zn(2+): Cys-116, His-137, Cys-167, Cys-170, Cys-173, and Cys-181. The residue at position 393 (Lys-393) is an N6-benzoyllysine.

This sequence belongs to the zinc-containing alcohol dehydrogenase family. Class-III subfamily. Homodimer. Zn(2+) serves as cofactor. Benzoylation at lys-393 by gcnE leads to the activation od adhB.

The catalysed reaction is a primary alcohol + NAD(+) = an aldehyde + NADH + H(+). It catalyses the reaction a secondary alcohol + NAD(+) = a ketone + NADH + H(+). Functionally, zinc-type alcohol dehydrogenase involved in development, secondary metabolism, pathogenicity, and stress response. Specifically controls the formation of sclerotia and the biosynthesis of aflatoxin. Contribute to seed colonization of A flavus on host maize seed. The polypeptide is Zinc-type alcohol dehydrogenase B (Aspergillus flavus (strain ATCC 200026 / FGSC A1120 / IAM 13836 / NRRL 3357 / JCM 12722 / SRRC 167)).